Consider the following 530-residue polypeptide: PTS system maltose-specific EIICB component (530 aa).

The 431-residue stretch at M1–S431 folds into the PTS EIIC type-1 domain. 10 consecutive transmembrane segments (helical) span residues F22–L42, I69–L89, V96–L116, I138–V158, L189–I209, F289–M309, I321–L341, F343–G363, V369–I389, and M399–I419. In terms of domain architecture, PTS EIIB type-1 spans G449–A530. The active-site Phosphocysteine intermediate; for EIIB activity is the C471.

It is found in the cell inner membrane. The catalysed reaction is D-maltose(out) + N(pros)-phospho-L-histidyl-[protein] = alpha-maltose 6'-phosphate(in) + L-histidyl-[protein]. Functionally, the phosphoenolpyruvate-dependent sugar phosphotransferase system (sugar PTS), a major carbohydrate active transport system, catalyzes the phosphorylation of incoming sugar substrates concomitantly with their translocation across the cell membrane. This system is involved in maltose transport. MalX can also recognize and transport glucose even though this sugar may not represent the natural substrate of the system. The protein is PTS system maltose-specific EIICB component of Escherichia coli (strain K12).